A 70-amino-acid polypeptide reads, in one-letter code: ATP synthase subunit c (70 aa).

Helical transmembrane passes span I4–I24 and I45–F65.

The protein belongs to the ATPase C chain family. F-type ATPases have 2 components, F(1) - the catalytic core - and F(0) - the membrane proton channel. F(1) has five subunits: alpha(3), beta(3), gamma(1), delta(1), epsilon(1). F(0) has three main subunits: a(1), b(2) and c(10-14). The alpha and beta chains form an alternating ring which encloses part of the gamma chain. F(1) is attached to F(0) by a central stalk formed by the gamma and epsilon chains, while a peripheral stalk is formed by the delta and b chains.

The protein resides in the cell membrane. In terms of biological role, f(1)F(0) ATP synthase produces ATP from ADP in the presence of a proton or sodium gradient. F-type ATPases consist of two structural domains, F(1) containing the extramembraneous catalytic core and F(0) containing the membrane proton channel, linked together by a central stalk and a peripheral stalk. During catalysis, ATP synthesis in the catalytic domain of F(1) is coupled via a rotary mechanism of the central stalk subunits to proton translocation. Its function is as follows. Key component of the F(0) channel; it plays a direct role in translocation across the membrane. A homomeric c-ring of between 10-14 subunits forms the central stalk rotor element with the F(1) delta and epsilon subunits. The protein is ATP synthase subunit c of Staphylococcus aureus (strain Mu3 / ATCC 700698).